Reading from the N-terminus, the 174-residue chain is Probable calcium-binding protein CML20 (174 aa).

A lipid anchor (N-myristoyl glycine) is attached at G2. Residues 14-35 form a disordered region; it reads LRRSRSRSPPPAVLDPSQSPLS. 4 EF-hand domains span residues 39–74, 75–100, 102–137, and 141–174; these read EAEPELIRVFRCFDTDGDGLISAAEMREFYGCSVDE, AEEMVAAADRDGDGFVSIEELRAVME, GGLDALRAAFDEYDEDGNGVITAEELRRALRRLNLD, and LTAEQCAEIVAAVDSDGDGVISFDEFKAMMSKQA. D52, D54, D56, E63, D83, D85, D87, E94, D115, D117, N119, E126, D154, D156, D158, and E165 together coordinate Ca(2+).

Potential calcium sensor. The protein is Probable calcium-binding protein CML20 (CML20) of Oryza sativa subsp. japonica (Rice).